The chain runs to 597 residues: Probable translation initiation factor IF-2 (597 aa).

Residues Leu-13–Glu-229 enclose the tr-type G domain. The interval Gly-22–Thr-29 is G1. Gly-22–Thr-29 provides a ligand contact to GTP. The G2 stretch occupies residues Ala-47–His-51. A G3 region spans residues Asp-84–Gly-87. GTP is bound by residues Asp-84 to His-88 and Asn-138 to Asp-141. The segment at Asn-138–Asp-141 is G4. A G5 region spans residues Ser-206 to Val-208.

This sequence belongs to the TRAFAC class translation factor GTPase superfamily. Classic translation factor GTPase family. IF-2 subfamily.

Its function is as follows. Function in general translation initiation by promoting the binding of the formylmethionine-tRNA to ribosomes. Seems to function along with eIF-2. This is Probable translation initiation factor IF-2 from Methanosarcina acetivorans (strain ATCC 35395 / DSM 2834 / JCM 12185 / C2A).